Reading from the N-terminus, the 401-residue chain is Imidazolonepropionase (401 aa).

2 residues coordinate Fe(3+): H70 and H72. Zn(2+) is bound by residues H70 and H72. 4-imidazolone-5-propanoate is bound by residues R79, Y142, and H175. Y142 lines the N-formimidoyl-L-glutamate pocket. H238 serves as a coordination point for Fe(3+). Residue H238 participates in Zn(2+) binding. Residue Q241 coordinates 4-imidazolone-5-propanoate. A Fe(3+)-binding site is contributed by D313. D313 provides a ligand contact to Zn(2+). Residues N315 and G317 each contribute to the N-formimidoyl-L-glutamate site. T318 contacts 4-imidazolone-5-propanoate.

The protein belongs to the metallo-dependent hydrolases superfamily. HutI family. The cofactor is Zn(2+). Requires Fe(3+) as cofactor.

Its subcellular location is the cytoplasm. It catalyses the reaction 4-imidazolone-5-propanoate + H2O = N-formimidoyl-L-glutamate. Its pathway is amino-acid degradation; L-histidine degradation into L-glutamate; N-formimidoyl-L-glutamate from L-histidine: step 3/3. Functionally, catalyzes the hydrolytic cleavage of the carbon-nitrogen bond in imidazolone-5-propanoate to yield N-formimidoyl-L-glutamate. It is the third step in the universal histidine degradation pathway. The sequence is that of Imidazolonepropionase from Acidiphilium cryptum (strain JF-5).